A 476-amino-acid chain; its full sequence is Bifunctional protein HldE (476 aa).

The interval 1–318 is ribokinase; it reads MKPILPDYSQ…AEAIHGSQDT (318 aa). 195-198 serves as a coordination point for ATP; the sequence is NMAE. Asp264 is an active-site residue. Residues 344–476 are cytidylyltransferase; sequence MTNGCFDILH…IIKAIKGGRG (133 aa).

The protein in the N-terminal section; belongs to the carbohydrate kinase PfkB family. It in the C-terminal section; belongs to the cytidylyltransferase family. In terms of assembly, homodimer.

The enzyme catalyses D-glycero-beta-D-manno-heptose 7-phosphate + ATP = D-glycero-beta-D-manno-heptose 1,7-bisphosphate + ADP + H(+). It carries out the reaction D-glycero-beta-D-manno-heptose 1-phosphate + ATP + H(+) = ADP-D-glycero-beta-D-manno-heptose + diphosphate. Its pathway is nucleotide-sugar biosynthesis; ADP-L-glycero-beta-D-manno-heptose biosynthesis; ADP-L-glycero-beta-D-manno-heptose from D-glycero-beta-D-manno-heptose 7-phosphate: step 1/4. It participates in nucleotide-sugar biosynthesis; ADP-L-glycero-beta-D-manno-heptose biosynthesis; ADP-L-glycero-beta-D-manno-heptose from D-glycero-beta-D-manno-heptose 7-phosphate: step 3/4. Catalyzes the phosphorylation of D-glycero-D-manno-heptose 7-phosphate at the C-1 position to selectively form D-glycero-beta-D-manno-heptose-1,7-bisphosphate. Its function is as follows. Catalyzes the ADP transfer from ATP to D-glycero-beta-D-manno-heptose 1-phosphate, yielding ADP-D-glycero-beta-D-manno-heptose. This chain is Bifunctional protein HldE, found in Vibrio atlanticus (strain LGP32) (Vibrio splendidus (strain Mel32)).